The primary structure comprises 76 residues: uncharacterized protein (76 aa).

Residues 40-60 (IVLNLVVLVGVVPLTWMFLGQ) traverse the membrane as a helical segment.

The protein resides in the membrane. This is an uncharacterized protein from Dictyostelium discoideum (Social amoeba).